The following is a 316-amino-acid chain: 4-hydroxy-3-methylbut-2-enyl diphosphate reductase (316 aa).

Residue Cys12 coordinates [4Fe-4S] cluster. 2 residues coordinate (2E)-4-hydroxy-3-methylbut-2-enyl diphosphate: His41 and His74. 2 residues coordinate dimethylallyl diphosphate: His41 and His74. The isopentenyl diphosphate site is built by His41 and His74. Position 96 (Cys96) interacts with [4Fe-4S] cluster. His124 contributes to the (2E)-4-hydroxy-3-methylbut-2-enyl diphosphate binding site. His124 contacts dimethylallyl diphosphate. His124 lines the isopentenyl diphosphate pocket. Glu126 acts as the Proton donor in catalysis. Thr169 is a (2E)-4-hydroxy-3-methylbut-2-enyl diphosphate binding site. Cys199 is a binding site for [4Fe-4S] cluster. (2E)-4-hydroxy-3-methylbut-2-enyl diphosphate contacts are provided by Ser227, Ser228, Asn229, and Ser271. Dimethylallyl diphosphate-binding residues include Ser227, Ser228, Asn229, and Ser271. Residues Ser227, Ser228, Asn229, and Ser271 each coordinate isopentenyl diphosphate.

This sequence belongs to the IspH family. [4Fe-4S] cluster serves as cofactor.

The catalysed reaction is isopentenyl diphosphate + 2 oxidized [2Fe-2S]-[ferredoxin] + H2O = (2E)-4-hydroxy-3-methylbut-2-enyl diphosphate + 2 reduced [2Fe-2S]-[ferredoxin] + 2 H(+). It catalyses the reaction dimethylallyl diphosphate + 2 oxidized [2Fe-2S]-[ferredoxin] + H2O = (2E)-4-hydroxy-3-methylbut-2-enyl diphosphate + 2 reduced [2Fe-2S]-[ferredoxin] + 2 H(+). It functions in the pathway isoprenoid biosynthesis; dimethylallyl diphosphate biosynthesis; dimethylallyl diphosphate from (2E)-4-hydroxy-3-methylbutenyl diphosphate: step 1/1. Its pathway is isoprenoid biosynthesis; isopentenyl diphosphate biosynthesis via DXP pathway; isopentenyl diphosphate from 1-deoxy-D-xylulose 5-phosphate: step 6/6. Functionally, catalyzes the conversion of 1-hydroxy-2-methyl-2-(E)-butenyl 4-diphosphate (HMBPP) into a mixture of isopentenyl diphosphate (IPP) and dimethylallyl diphosphate (DMAPP). Acts in the terminal step of the DOXP/MEP pathway for isoprenoid precursor biosynthesis. This is 4-hydroxy-3-methylbut-2-enyl diphosphate reductase from Xylella fastidiosa (strain M23).